We begin with the raw amino-acid sequence, 215 residues long: 3-demethoxyubiquinol 3-hydroxylase (215 aa).

Residues E64, E94, H97, E146, E178, and H181 each coordinate Fe cation.

Belongs to the COQ7 family. Fe cation serves as cofactor.

The protein resides in the cell membrane. The catalysed reaction is a 5-methoxy-2-methyl-3-(all-trans-polyprenyl)benzene-1,4-diol + AH2 + O2 = a 3-demethylubiquinol + A + H2O. It participates in cofactor biosynthesis; ubiquinone biosynthesis. In terms of biological role, catalyzes the hydroxylation of 2-nonaprenyl-3-methyl-6-methoxy-1,4-benzoquinol during ubiquinone biosynthesis. The chain is 3-demethoxyubiquinol 3-hydroxylase from Pseudomonas putida (strain W619).